The primary structure comprises 165 residues: Endoribonuclease YbeY (165 aa).

The Zn(2+) site is built by His130, His134, and His140.

The protein belongs to the endoribonuclease YbeY family. Zn(2+) is required as a cofactor.

It is found in the cytoplasm. In terms of biological role, single strand-specific metallo-endoribonuclease involved in late-stage 70S ribosome quality control and in maturation of the 3' terminus of the 16S rRNA. The polypeptide is Endoribonuclease YbeY (Streptococcus suis (strain 98HAH33)).